Reading from the N-terminus, the 231-residue chain is Thermonuclease (231 aa).

The signal sequence occupies residues 1 to 26; sequence MLVMTEYLLSAGICMAIVSILLIGMA. 2 propeptides span residues 27–63 and 64–82; these read ISNVSKGQYAKRFFFFATSCLVLTLVVVSSLSSSANA and SQTDNGVNRSGSEDPTVYS. The span at 61-73 shows a compositional bias: polar residues; it reads ANASQTDNGVNRS. Residues 61-86 form a disordered region; sequence ANASQTDNGVNRSGSEDPTVYSATST. D103 contacts Ca(2+). The active site involves R117. Positions 122 and 123 each coordinate Ca(2+). Residues E125 and R169 contribute to the active site. Basic and acidic residues predominate over residues 203–219; it reads HEQHLRKSEAQAKKEKL. The segment at 203-231 is disordered; that stretch reads HEQHLRKSEAQAKKEKLNIWSEDNADSGQ.

This sequence belongs to the thermonuclease family. It depends on Ca(2+) as a cofactor.

The protein resides in the secreted. It localises to the membrane. The catalysed reaction is Endonucleolytic cleavage to nucleoside 3'-phosphates and 3'-phosphooligonucleotide end-products.. Its function is as follows. Enzyme that catalyzes the hydrolysis of both DNA and RNA at the 5' position of the phosphodiester bond. The sequence is that of Thermonuclease from Staphylococcus aureus.